An 803-amino-acid chain; its full sequence is H(+)/Cl(-) exchange transporter 7 (803 aa).

The tract at residues 1–46 (MANVSKKVSWSGRDRDDEEGAPLLRRTGQPDEETPLLNGAGPGARQ) is disordered. At 1-124 (MANVSKKVSW…TAFRTVEIKR (124 aa)) the chain is on the cytoplasmic side. Serine 9 is subject to Phosphoserine. The next 2 helical transmembrane spans lie at 125-157 (WVICALIGILTGLVACFIDIVVENLAGLKYRVI) and 172-195 (FSLLLWATLNSAFVLVGSVIVAFI). Residues 201 to 205 (GSGIP) carry the Selectivity filter part_1 motif. Serine 202 serves as a coordination point for chloride. The segment at residues 204 to 211 (IPQIKCFL) is an intramembrane region (helical). 2 helical membrane passes run 221–239 (RLKTLVIKVSGVILSVVGG) and 245–262 (EGPMIHSGSVIAAGISQG). Positions 243-247 (GKEGP) match the Selectivity filter part_2 motif. Intramembrane regions (helical) lie at residues 286–298 (FVSAGAAAGVSAA) and 302–310 (PVGGVLFSL). The next 5 membrane-spanning stretches (helical) occupy residues 320–339 (FLTWRIFFASMISTFTLNFV), 373–403 (IPVFIAMGVVGGILGAVFNALNYWLTMFRIR), 408–430 (PCLQVIEAMLVAAVTATVAFVLI), 485–505 (PMTLGLFTLVYFFLACWTYGL), and 510–533 (GVFIPSLLIGAAWGRLFGISMSYL). A Selectivity filter part_3 motif is present at residues 510-514 (GVFIP). Phenylalanine 512 is a chloride binding site. Residues 543–557 (GKYALMGAAAQLGGI) constitute an intramembrane region (helical). The note=Loop between two helices intramembrane region spans 558–560 (VRM). An intramembrane region (helical) is located at residues 561–572 (TLSLTVIMMEAT). Positions 573–576 (SNVT) form an intramembrane region, note=Loop between two helices. Residues 577–595 (YGFPIMLVLMTAKIVGDVF) traverse the membrane as a helical segment. Over 596–803 (IEGLYDMHIQ…GLEELSLAQT (208 aa)) the chain is Cytoplasmic. Residue tyrosine 600 participates in chloride binding. CBS domains follow at residues 629–693 (MSTP…VFVE) and 739–797 (MNPS…GLEE). ATP is bound by residues 656-658 (HNG) and 781-784 (TRKD). Serine 799 carries the post-translational modification Phosphoserine.

Belongs to the chloride channel (TC 2.A.49) family. ClC-7/CLCN7 subfamily. In terms of assembly, chloride channel 7 are heteromers of alpha (CLCN7) and beta (OSTM1) subunits. As to expression, brain, testis, muscle and kidney.

The protein localises to the lysosome membrane. The catalysed reaction is 2 chloride(in) + H(+)(out) = 2 chloride(out) + H(+)(in). Its function is as follows. Slowly voltage-gated channel mediating the exchange of chloride ions against protons. Functions as antiporter and contributes to the acidification of the lysosome lumen and may be involved in maintaining lysosomal pH. The CLC channel family contains both chloride channels and proton-coupled anion transporters that exchange chloride or another anion for protons. The presence of conserved gating glutamate residues is typical for family members that function as antiporters. This Rattus norvegicus (Rat) protein is H(+)/Cl(-) exchange transporter 7 (Clcn7).